We begin with the raw amino-acid sequence, 190 residues long: Lipid A acyltransferase PagP (190 aa).

Positions 1–29 (MYVAMIIRKYFLIIALLVMPWLAIPSVSA) are cleaved as a signal peptide. Catalysis depends on residues H62, D105, and S106.

The protein belongs to the lipid A palmitoyltransferase family. Homodimer.

Its subcellular location is the cell outer membrane. It catalyses the reaction a lipid A + a 1,2-diacyl-sn-glycero-3-phosphocholine = a hepta-acyl lipid A + a 2-acyl-sn-glycero-3-phosphocholine. The enzyme catalyses a lipid IVA + a 1,2-diacyl-sn-glycero-3-phosphocholine = a lipid IVB + a 2-acyl-sn-glycero-3-phosphocholine. The catalysed reaction is a lipid IIA + a 1,2-diacyl-sn-glycero-3-phosphocholine = a lipid IIB + a 2-acyl-sn-glycero-3-phosphocholine. Transfers a fatty acid residue from the sn-1 position of a phospholipid to the N-linked hydroxyfatty acid chain on the proximal unit of lipid A or its precursors. The polypeptide is Lipid A acyltransferase PagP (Salmonella typhi).